A 194-amino-acid polypeptide reads, in one-letter code: MGIYKYIREAWKRPKESYVRQLLWERLQQWRREPAVVRIERPTRLDRARALGYKPKQGIIVVRVRVRRGGLRKPRPKNSKKPATLGVNKITMGKSIQRIAEERAARKYPNMEVLNSYWVGEDGKHKWYEVILVDPYHPAIKADPQLNWLCTGKHRGRAFRGLTSAGKKGRGLRNKGIGAEKVRPSIRAHGRRGK.

Residues serine 164–lysine 194 are disordered. The span at proline 184–lysine 194 shows a compositional bias: basic residues.

Belongs to the eukaryotic ribosomal protein eL15 family.

The protein is Large ribosomal subunit protein eL15 (rpl15e) of Methanocaldococcus jannaschii (strain ATCC 43067 / DSM 2661 / JAL-1 / JCM 10045 / NBRC 100440) (Methanococcus jannaschii).